The chain runs to 308 residues: tRNA pseudouridine synthase B (308 aa).

Aspartate 47 serves as the catalytic Nucleophile.

This sequence belongs to the pseudouridine synthase TruB family. Type 1 subfamily.

The catalysed reaction is uridine(55) in tRNA = pseudouridine(55) in tRNA. In terms of biological role, responsible for synthesis of pseudouridine from uracil-55 in the psi GC loop of transfer RNAs. The sequence is that of tRNA pseudouridine synthase B from Xanthomonas oryzae pv. oryzae (strain MAFF 311018).